Here is a 239-residue protein sequence, read N- to C-terminus: Calcium load-activated calcium channel (239 aa).

The Lumenal portion of the chain corresponds to 1–55 (MPRKRKCDLRAVRVGLLLGGGGVYGSRFRFTFPGCRALSPWRVRVQRRRCEMSTM). A helical membrane pass occupies residues 56 to 83 (FADTLLIVFISVCTALLAEGITWVLVYR). The stretch at 83–140 (RTDKYKRLKAEVEKQSKKLEKKKETITESAGRQQKKKIERQEEKLKNNNRDLSMVRMK) forms a coiled coil. Residues 84–137 (TDKYKRLKAEVEKQSKKLEKKKETITESAGRQQKKKIERQEEKLKNNNRDLSMV) are Cytoplasmic-facing. At serine 111 the chain carries Phosphoserine. A helical transmembrane segment spans residues 138-157 (RMKSMFAIGFCFTALMGMFN). Residues 158–171 (SIFDGRVVAKLPFT) lie on the Lumenal side of the membrane. An intramembrane segment occupies 172 to 181 (PLSYIQGLSH). At 182–191 (RNLLGDDTTD) the chain is on the lumenal side. A helical transmembrane segment spans residues 192–213 (CSFIFLYILCTMSIRQNIQKIL). The Cytoplasmic portion of the chain corresponds to 214 to 239 (GLAPSRAATKQAGGFLGPPPPSGKFS). Serine 239 bears the Phosphoserine mark.

The protein belongs to the TMCO1 family. In terms of assembly, homodimer and homotetramer. Homodimer under resting conditions; forms homotetramers following ER calcium overload. Component of the GET- and EMC-like (GEL) complex, composed of RAB5IF/OPTI and TMCO1. The GEL complex is part of the multi-pass translocon (MPT) complex, composed of three subcomplexes, the GEL complex (composed of RAB5IF/OPTI and TMCO1), the BOS complex (composed of NCLN/Nicalin, NOMO and TMEM147) and the PAT complex (composed of WDR83OS/Asterix and CCDC47). The MPT complex associates with the SEC61 complex. In terms of tissue distribution, widely expressed in adult and fetal tissues, with higher levels in thymus, prostate, testis and small intestine and lower levels in brain, placenta, lung and kidney. Present in most tissues in the eye, including the trabecular meshwork and retina (at protein level).

Its subcellular location is the endoplasmic reticulum membrane. It is found in the golgi apparatus membrane. The protein resides in the mitochondrion membrane. The catalysed reaction is Ca(2+)(in) = Ca(2+)(out). Endoplasmic reticulum (ER) calcium-selective channel preventing intracellular Ca2(+) stores from overfilling and maintaining calcium homeostasis in the ER. In response to endoplasmic reticulum (ER) Ca2(+) overloading, assembles into a homotetramer, forming a functional calcium-selective channel facilitating Ca2(+) release. Mediates ER Ca2(+) homeostasis in osteoblasts and plays a key role in bone formation, via the CaMKII-HDAC4-RUNX2 signaling axis. Component of the multi-pass translocon (MPT) complex that mediates insertion of multi-pass membrane proteins into the lipid bilayer of membranes. The MPT complex takes over after the SEC61 complex: following membrane insertion of the first few transmembrane segments of proteins by the SEC61 complex, the MPT complex occludes the lateral gate of the SEC61 complex to promote insertion of subsequent transmembrane regions. Within the MPT complex, the GEL subcomplex may mediate insertion of transmembrane regions into the membrane. This is Calcium load-activated calcium channel from Homo sapiens (Human).